Reading from the N-terminus, the 402-residue chain is MFYTAATALRDFLKQESAGGIVLMFAAVLALIFANTALADTYFSVLATEIAVTVGGGGIEKPALLWINDGLMAVFFFLVGLEVKREVLTGQLSSWKQASLPLIAAFGGIVLPALVFYGINSGTPENLSGWAIPAATDIAFALGILALLGKRVPVALKALLLAIAVIDDIAAIAIIAIFYTPGVELAMLGAAAITLLILSAFGRAKAGSSIPYIVLGIVLWYFVLKSGVHATLAGVALAMTVPLIDRKGNHMLEHMEHALHSWVAFLVVPIFALANAGVSFEGVELSALFAPLPLGIALGLIVGKQVGIFGFAWLAVKTGFAQLPSSVGWLQVWGLSLVAGIGFTMSLFIGNLAFADPAQINAVKIGVLSGSLIAALVGIAILVLGAKAPAAKSADERVQAPA.

The next 11 membrane-spanning stretches (helical) occupy residues 18–38, 63–83, 99–119, 129–149, 158–178, 182–202, 210–230, 258–278, 296–316, 329–349, and 365–385; these read AGGI…NTAL, ALLW…GLEV, SLPL…FYGI, GWAI…ALLG, ALLL…IAIF, GVEL…SAFG, IPYI…GVHA, ALHS…NAGV, IALG…WLAV, WLQV…SLFI, and IGVL…LVLG.

It belongs to the NhaA Na(+)/H(+) (TC 2.A.33) antiporter family.

Its subcellular location is the cell inner membrane. It carries out the reaction Na(+)(in) + 2 H(+)(out) = Na(+)(out) + 2 H(+)(in). Na(+)/H(+) antiporter that extrudes sodium in exchange for external protons. The sequence is that of Na(+)/H(+) antiporter NhaA 2 from Erythrobacter litoralis (strain HTCC2594).